The primary structure comprises 269 residues: Ribosomal RNA small subunit methyltransferase A (269 aa).

S-adenosyl-L-methionine-binding residues include Ile-17, Gly-42, Glu-64, Asp-89, and Asn-109.

The protein belongs to the class I-like SAM-binding methyltransferase superfamily. rRNA adenine N(6)-methyltransferase family. RsmA subfamily.

It localises to the cytoplasm. The catalysed reaction is adenosine(1518)/adenosine(1519) in 16S rRNA + 4 S-adenosyl-L-methionine = N(6)-dimethyladenosine(1518)/N(6)-dimethyladenosine(1519) in 16S rRNA + 4 S-adenosyl-L-homocysteine + 4 H(+). Specifically dimethylates two adjacent adenosines (A1518 and A1519) in the loop of a conserved hairpin near the 3'-end of 16S rRNA in the 30S particle. May play a critical role in biogenesis of 30S subunits. In Anaplasma phagocytophilum (strain HZ), this protein is Ribosomal RNA small subunit methyltransferase A.